The sequence spans 551 residues: Glucose-6-phosphate isomerase (551 aa).

Glutamate 349 acts as the Proton donor in catalysis. Catalysis depends on residues histidine 378 and lysine 480.

This sequence belongs to the GPI family.

The protein localises to the cytoplasm. The catalysed reaction is alpha-D-glucose 6-phosphate = beta-D-fructose 6-phosphate. Its pathway is carbohydrate biosynthesis; gluconeogenesis. The protein operates within carbohydrate degradation; glycolysis; D-glyceraldehyde 3-phosphate and glycerone phosphate from D-glucose: step 2/4. In terms of biological role, catalyzes the reversible isomerization of glucose-6-phosphate to fructose-6-phosphate. This is Glucose-6-phosphate isomerase from Prochlorococcus marinus (strain MIT 9313).